The primary structure comprises 954 residues: Bifunctional glutamine synthetase adenylyltransferase/adenylyl-removing enzyme (954 aa).

Residues 1-450 form an adenylyl removase region; it reads MENISNKPLS…HFIETVGGRT (450 aa). The interval 454 to 954 is adenylyl transferase; it reads GADLWTQQLW…MDIYQRILVD (501 aa).

The protein belongs to the GlnE family. Requires Mg(2+) as cofactor.

It catalyses the reaction [glutamine synthetase]-O(4)-(5'-adenylyl)-L-tyrosine + phosphate = [glutamine synthetase]-L-tyrosine + ADP. It carries out the reaction [glutamine synthetase]-L-tyrosine + ATP = [glutamine synthetase]-O(4)-(5'-adenylyl)-L-tyrosine + diphosphate. Involved in the regulation of glutamine synthetase GlnA, a key enzyme in the process to assimilate ammonia. When cellular nitrogen levels are high, the C-terminal adenylyl transferase (AT) inactivates GlnA by covalent transfer of an adenylyl group from ATP to specific tyrosine residue of GlnA, thus reducing its activity. Conversely, when nitrogen levels are low, the N-terminal adenylyl removase (AR) activates GlnA by removing the adenylyl group by phosphorolysis, increasing its activity. The regulatory region of GlnE binds the signal transduction protein PII (GlnB) which indicates the nitrogen status of the cell. This Shewanella woodyi (strain ATCC 51908 / MS32) protein is Bifunctional glutamine synthetase adenylyltransferase/adenylyl-removing enzyme.